The sequence spans 218 residues: Cytidylate kinase (218 aa).

Residue 10–18 (GPAGSGKST) participates in ATP binding.

This sequence belongs to the cytidylate kinase family. Type 1 subfamily.

Its subcellular location is the cytoplasm. It catalyses the reaction CMP + ATP = CDP + ADP. The catalysed reaction is dCMP + ATP = dCDP + ADP. The protein is Cytidylate kinase of Fusobacterium nucleatum subsp. nucleatum (strain ATCC 25586 / DSM 15643 / BCRC 10681 / CIP 101130 / JCM 8532 / KCTC 2640 / LMG 13131 / VPI 4355).